The primary structure comprises 471 residues: Glutamate--tRNA ligase (471 aa).

Residues 9 to 19 (PSPTGYLHVGG) carry the 'HIGH' region motif. The Zn(2+) site is built by cysteine 98, cysteine 100, cysteine 125, and aspartate 127. The short motif at 237 to 241 (KLSKR) is the 'KMSKS' region element. An ATP-binding site is contributed by lysine 240.

This sequence belongs to the class-I aminoacyl-tRNA synthetase family. Glutamate--tRNA ligase type 1 subfamily. Monomer. It depends on Zn(2+) as a cofactor.

Its subcellular location is the cytoplasm. It carries out the reaction tRNA(Glu) + L-glutamate + ATP = L-glutamyl-tRNA(Glu) + AMP + diphosphate. Its function is as follows. Catalyzes the attachment of glutamate to tRNA(Glu) in a two-step reaction: glutamate is first activated by ATP to form Glu-AMP and then transferred to the acceptor end of tRNA(Glu). This Yersinia pseudotuberculosis serotype O:1b (strain IP 31758) protein is Glutamate--tRNA ligase.